Consider the following 362-residue polypeptide: Heat-inducible transcription repressor HrcA (362 aa).

The protein belongs to the HrcA family.

Functionally, negative regulator of class I heat shock genes (grpE-dnaK-dnaJ and groELS operons). Prevents heat-shock induction of these operons. The sequence is that of Heat-inducible transcription repressor HrcA from Rhizobium leguminosarum bv. trifolii (strain WSM2304).